A 161-amino-acid chain; its full sequence is 3-isopropylmalate dehydratase small subunit (161 aa).

It belongs to the LeuD family. LeuD type 2 subfamily. In terms of assembly, heterodimer of LeuC and LeuD.

The enzyme catalyses (2R,3S)-3-isopropylmalate = (2S)-2-isopropylmalate. It participates in amino-acid biosynthesis; L-leucine biosynthesis; L-leucine from 3-methyl-2-oxobutanoate: step 2/4. Catalyzes the isomerization between 2-isopropylmalate and 3-isopropylmalate, via the formation of 2-isopropylmaleate. The protein is 3-isopropylmalate dehydratase small subunit of Pyrobaculum calidifontis (strain DSM 21063 / JCM 11548 / VA1).